The following is a 415-amino-acid chain: Carboxypeptidase G2 (415 aa).

A signal peptide spans Met-1–Thr-22. Zn(2+) is bound at residue His-112. The active site involves Asp-114. Asp-141 contributes to the Zn(2+) binding site. The Proton acceptor role is filled by Glu-175. Zn(2+) is bound by residues Glu-176, Glu-200, and His-385.

It belongs to the peptidase M20A family. As to quaternary structure, homodimer. Requires Zn(2+) as cofactor.

The catalysed reaction is Release of C-terminal glutamate residues from a wide range of N-acylating moieties, including peptidyl, aminoacyl, benzoyl, benzyloxycarbonyl, folyl and pteroyl groups.. Catalyzes the hydrolysis of reduced and non-reduced folates to pteroates and L-glutamate. This enzyme has a broad specificity. This is Carboxypeptidase G2 (cpg2) from Pseudomonas sp. (strain RS-16).